Consider the following 1081-residue polypeptide: Cellulose synthase A catalytic subunit 1 [UDP-forming] (1081 aa).

Methionine 1 is modified (N-acetylmethionine). Topologically, residues methionine 1–arginine 270 are cytoplasmic. Cysteine 39, cysteine 42, cysteine 58, cysteine 61, cysteine 66, cysteine 69, cysteine 81, and cysteine 84 together coordinate Zn(2+). The RING-type; degenerate zinc finger occupies cysteine 39–lysine 85. The segment at glycine 118–aspartate 195 is disordered. Basic and acidic residues predominate over residues histidine 127 to serine 139. Positions proline 158–glycine 168 are enriched in polar residues. Residues leucine 271–tyrosine 291 traverse the membrane as a helical segment. The Extracellular portion of the chain corresponds to arginine 292–asparagine 299. The chain crosses the membrane as a helical span at residues alanine 300 to leucine 320. At aspartate 321–threonine 856 the chain is on the cytoplasmic side. Positions 359, 365, 366, and 395 each coordinate UDP-alpha-D-glucose. Aspartate 395 is a catalytic residue. Residues valine 449 to isoleucine 476 are a coiled coil. Lysine 536 contacts UDP-alpha-D-glucose. Residues lysine 537 and aspartate 561 each contribute to the Mn(2+) site. Aspartate 780 is an active-site residue. Residues isoleucine 857–leucine 877 traverse the membrane as a helical segment. The Extracellular segment spans residues isoleucine 878–asparagine 889. The helical transmembrane segment at tyrosine 890–leucine 910 threads the bilayer. The Cytoplasmic segment spans residues arginine 911–glutamine 925. A helical membrane pass occupies residues phenylalanine 926 to valine 946. Over leucine 947–threonine 976 the chain is Extracellular. The N-linked (GlcNAc...) asparagine glycan is linked to asparagine 953. A helical transmembrane segment spans residues alanine 977 to valine 997. Residues serine 998 to tryptophan 1008 lie on the Cytoplasmic side of the membrane. A helical transmembrane segment spans residues glycine 1009–leucine 1029. The Extracellular segment spans residues lysine 1030–arginine 1038. A helical membrane pass occupies residues threonine 1039–valine 1059. At arginine 1060–phenylalanine 1081 the chain is on the cytoplasmic side.

This sequence belongs to the glycosyltransferase 2 family. Plant cellulose synthase subfamily. Interacts with CESA3 and CESA6. Assembly with CESA3 and CESA6 is required for functional complex in primary cell wall cellulose synthesis. Interacts with STL1 and STL2, but not with GOT1. Binds to CSI1. Interacts with PAT24/TIP1. Zn(2+) is required as a cofactor. The cofactor is Mn(2+). S-acylated. Expressed in germinating seeds, seedlings, roots, stems, shoots leaves and flowers, but not in mature flowers.

The protein localises to the cell membrane. The catalysed reaction is [(1-&gt;4)-beta-D-glucosyl](n) + UDP-alpha-D-glucose = [(1-&gt;4)-beta-D-glucosyl](n+1) + UDP + H(+). It participates in glycan metabolism; plant cellulose biosynthesis. Catalytic subunit of cellulose synthase terminal complexes ('rosettes'), required for beta-1,4-glucan microfibril crystallization, a major mechanism of the cell wall formation. Involved in the primary cell wall formation. Required during embryogenesis for cell elongation, orientation of cell expansion and complex cell wall formations, such as interdigitated pattern of epidermal pavement cells, stomatal guard cells and trichomes. Plays a role in lateral roots formation, but seems not necessary for the development of tip-growing cells such as root hairs. The presence of each protein CESA1 and CESA6 is critical for cell expansion after germination. This Arabidopsis thaliana (Mouse-ear cress) protein is Cellulose synthase A catalytic subunit 1 [UDP-forming].